The sequence spans 242 residues: 1-(5-phosphoribosyl)-5-[(5-phosphoribosylamino)methylideneamino] imidazole-4-carboxamide isomerase (242 aa).

The active-site Proton acceptor is D10. D132 (proton donor) is an active-site residue.

The protein belongs to the HisA/HisF family.

Its subcellular location is the cytoplasm. The catalysed reaction is 1-(5-phospho-beta-D-ribosyl)-5-[(5-phospho-beta-D-ribosylamino)methylideneamino]imidazole-4-carboxamide = 5-[(5-phospho-1-deoxy-D-ribulos-1-ylimino)methylamino]-1-(5-phospho-beta-D-ribosyl)imidazole-4-carboxamide. Its pathway is amino-acid biosynthesis; L-histidine biosynthesis; L-histidine from 5-phospho-alpha-D-ribose 1-diphosphate: step 4/9. In Methanothrix thermoacetophila (strain DSM 6194 / JCM 14653 / NBRC 101360 / PT) (Methanosaeta thermophila), this protein is 1-(5-phosphoribosyl)-5-[(5-phosphoribosylamino)methylideneamino] imidazole-4-carboxamide isomerase.